Here is a 445-residue protein sequence, read N- to C-terminus: Amino-acid acetyltransferase (445 aa).

One can recognise an N-acetyltransferase domain in the interval 299–438 (EQVRQAQIDD…QGLYNYQRNS (140 aa)).

The protein belongs to the acetyltransferase family. ArgA subfamily.

The protein resides in the cytoplasm. It carries out the reaction L-glutamate + acetyl-CoA = N-acetyl-L-glutamate + CoA + H(+). Its pathway is amino-acid biosynthesis; L-arginine biosynthesis; N(2)-acetyl-L-ornithine from L-glutamate: step 1/4. This chain is Amino-acid acetyltransferase, found in Vibrio atlanticus (strain LGP32) (Vibrio splendidus (strain Mel32)).